The primary structure comprises 1383 residues: DNA-directed RNA polymerase subunit beta'' (1383 aa).

Positions 220, 289, 296, and 299 each coordinate Zn(2+).

This sequence belongs to the RNA polymerase beta' chain family. RpoC2 subfamily. In terms of assembly, in plastids the minimal PEP RNA polymerase catalytic core is composed of four subunits: alpha, beta, beta', and beta''. When a (nuclear-encoded) sigma factor is associated with the core the holoenzyme is formed, which can initiate transcription. Zn(2+) is required as a cofactor.

It localises to the plastid. The protein localises to the chloroplast. The catalysed reaction is RNA(n) + a ribonucleoside 5'-triphosphate = RNA(n+1) + diphosphate. Its function is as follows. DNA-dependent RNA polymerase catalyzes the transcription of DNA into RNA using the four ribonucleoside triphosphates as substrates. The polypeptide is DNA-directed RNA polymerase subunit beta'' (Oenothera parviflora (Small-flowered evening primrose)).